Reading from the N-terminus, the 399-residue chain is 1-deoxy-D-xylulose 5-phosphate reductoisomerase (399 aa).

Residues threonine 13, glycine 14, serine 15, isoleucine 16, and asparagine 127 each coordinate NADPH. Position 128 (lysine 128) interacts with 1-deoxy-D-xylulose 5-phosphate. Glutamate 129 is an NADPH binding site. Aspartate 153 contacts Mn(2+). 1-deoxy-D-xylulose 5-phosphate is bound by residues serine 154, glutamate 155, serine 187, and histidine 210. Glutamate 155 provides a ligand contact to Mn(2+). Glycine 216 serves as a coordination point for NADPH. 1-deoxy-D-xylulose 5-phosphate contacts are provided by serine 223, asparagine 228, lysine 229, and glutamate 232. Glutamate 232 is a binding site for Mn(2+).

Belongs to the DXR family. Mg(2+) is required as a cofactor. The cofactor is Mn(2+).

The enzyme catalyses 2-C-methyl-D-erythritol 4-phosphate + NADP(+) = 1-deoxy-D-xylulose 5-phosphate + NADPH + H(+). It participates in isoprenoid biosynthesis; isopentenyl diphosphate biosynthesis via DXP pathway; isopentenyl diphosphate from 1-deoxy-D-xylulose 5-phosphate: step 1/6. Functionally, catalyzes the NADPH-dependent rearrangement and reduction of 1-deoxy-D-xylulose-5-phosphate (DXP) to 2-C-methyl-D-erythritol 4-phosphate (MEP). The polypeptide is 1-deoxy-D-xylulose 5-phosphate reductoisomerase (Bordetella parapertussis (strain 12822 / ATCC BAA-587 / NCTC 13253)).